The sequence spans 226 residues: Phosphoribosylformylglycinamidine synthase subunit PurQ (226 aa).

Positions 2–226 (KFAVIQFPGS…LKNFLVTVKN (225 aa)) constitute a Glutamine amidotransferase type-1 domain. Catalysis depends on cysteine 86, which acts as the Nucleophile. Residues histidine 195 and glutamate 197 contribute to the active site.

As to quaternary structure, part of the FGAM synthase complex composed of 1 PurL, 1 PurQ and 2 PurS subunits.

The protein localises to the cytoplasm. The enzyme catalyses N(2)-formyl-N(1)-(5-phospho-beta-D-ribosyl)glycinamide + L-glutamine + ATP + H2O = 2-formamido-N(1)-(5-O-phospho-beta-D-ribosyl)acetamidine + L-glutamate + ADP + phosphate + H(+). It catalyses the reaction L-glutamine + H2O = L-glutamate + NH4(+). Its pathway is purine metabolism; IMP biosynthesis via de novo pathway; 5-amino-1-(5-phospho-D-ribosyl)imidazole from N(2)-formyl-N(1)-(5-phospho-D-ribosyl)glycinamide: step 1/2. In terms of biological role, part of the phosphoribosylformylglycinamidine synthase complex involved in the purines biosynthetic pathway. Catalyzes the ATP-dependent conversion of formylglycinamide ribonucleotide (FGAR) and glutamine to yield formylglycinamidine ribonucleotide (FGAM) and glutamate. The FGAM synthase complex is composed of three subunits. PurQ produces an ammonia molecule by converting glutamine to glutamate. PurL transfers the ammonia molecule to FGAR to form FGAM in an ATP-dependent manner. PurS interacts with PurQ and PurL and is thought to assist in the transfer of the ammonia molecule from PurQ to PurL. In Lactococcus lactis subsp. cremoris (Streptococcus cremoris), this protein is Phosphoribosylformylglycinamidine synthase subunit PurQ.